The following is a 349-amino-acid chain: Protein-glutamate methylesterase/protein-glutamine glutaminase 2 (349 aa).

Residues 4–121 (SVLVVDDSAL…AEGMQAYAEE (118 aa)) enclose the Response regulatory domain. At Asp55 the chain carries 4-aspartylphosphate. In terms of domain architecture, CheB-type methylesterase spans 151–343 (LLSTEKIIAL…AALLQQAARR (193 aa)). Catalysis depends on residues Ser163, His189, and Asp285.

It belongs to the CheB family. As to quaternary structure, interacts with the C-terminal pentapeptide GWEEF of McpB. Post-translationally, phosphorylated by CheA. Phosphorylation of the N-terminal regulatory domain activates the methylesterase activity.

The protein resides in the cytoplasm. The enzyme catalyses [protein]-L-glutamate 5-O-methyl ester + H2O = L-glutamyl-[protein] + methanol + H(+). The catalysed reaction is L-glutaminyl-[protein] + H2O = L-glutamyl-[protein] + NH4(+). Its function is as follows. Involved in chemotaxis. Part of a chemotaxis signal transduction system that modulates chemotaxis in response to various stimuli. Catalyzes the demethylation of specific methylglutamate residues introduced into the chemoreceptors (methyl-accepting chemotaxis proteins or MCP) by CheR. Also mediates the irreversible deamidation of specific glutamine residues to glutamic acid. Acts on the methyl-accepting chemotaxis protein McpB. May be involved in a specific chemotactic response, which takes place during infection and is required for P.aeruginosa pathogenicity. The protein is Protein-glutamate methylesterase/protein-glutamine glutaminase 2 of Pseudomonas aeruginosa (strain ATCC 15692 / DSM 22644 / CIP 104116 / JCM 14847 / LMG 12228 / 1C / PRS 101 / PAO1).